A 90-amino-acid polypeptide reads, in one-letter code: Small ribosomal subunit protein uS15 (90 aa).

The protein belongs to the universal ribosomal protein uS15 family. As to quaternary structure, part of the 30S ribosomal subunit. Forms a bridge to the 50S subunit in the 70S ribosome, contacting the 23S rRNA.

In terms of biological role, one of the primary rRNA binding proteins, it binds directly to 16S rRNA where it helps nucleate assembly of the platform of the 30S subunit by binding and bridging several RNA helices of the 16S rRNA. Forms an intersubunit bridge (bridge B4) with the 23S rRNA of the 50S subunit in the ribosome. The chain is Small ribosomal subunit protein uS15 from Wolinella succinogenes (strain ATCC 29543 / DSM 1740 / CCUG 13145 / JCM 31913 / LMG 7466 / NCTC 11488 / FDC 602W) (Vibrio succinogenes).